Here is a 250-residue protein sequence, read N- to C-terminus: Probable 2' cyclic ADP-D-ribose synthase TcpB (250 aa).

Residues 1–46 (MSKEKQAQSKAHKAQQAISSAKSLSTQKSKMSELERATRDGAAIGK) are disordered. A necessary and sufficient for phosphoinositide binding region spans residues 1 to 117 (MSKEKQAQSK…TASATMEAEE (117 aa)). Positions 14 to 23 (AQQAISSAKS) are enriched in low complexity. Residues 30–39 (KMSELERATR) are compositionally biased toward basic and acidic residues. One can recognise a TIR domain in the interval 117 to 250 (EEYDFFISHA…EIAKELHSLI (134 aa)). Glu192 is a catalytic residue.

As to quaternary structure, homodimer; may also form oligomers. Interacts with host TIRAP. Interacts with host MYD88. Interaction with host MYD88 was not confirmed by another study. Interacts with host TLR4. Abolishes the interaction of host TIRAP with TLR4.

It is found in the secreted. It localises to the host cell membrane. The catalysed reaction is NAD(+) + H2O = ADP-D-ribose + nicotinamide + H(+). It carries out the reaction NAD(+) = 2'cADPR + nicotinamide + H(+). Virulence factor that interferes with host Toll-like receptor 2 (TLR2) and TLR4 signaling, resulting in the reduction of dendritic cell maturation, inhibition of pro-inflammatory cytokine secretion and impaired NF-kappa-B activation in macrophages. Interferes with host TLR4 signaling by abolishing host TLR4-TIRAP interaction (but not host TIRAP-MYD88 interaction) and its downstream signaling. Inhibits host TLR 2 induced NF-kappa-B activation and TNF (tumor necrosis factor) secretion. Binds phosphoinositide (PtdIns) via its N-terminal domain. Has NAD(+) hydrolase (NADase) activity, catalyzes cleavage of NAD(+) into ADP-D-ribose (ADPR) and nicotinamide. Also generates a cyclization variant of cyclic ADPR (cADPR), termed v-cADPR (probably 2'cADPR). This Brucella melitensis biotype 1 (strain ATCC 23456 / CCUG 17765 / NCTC 10094 / 16M) protein is Probable 2' cyclic ADP-D-ribose synthase TcpB.